Reading from the N-terminus, the 609-residue chain is Putative transcriptional regulatory protein y4pA (609 aa).

The region spanning 313–533 (IVGRSPSIQQ…LRSVLETAAI (221 aa)) is the Sigma-54 factor interaction domain. 395–404 (HPKATLLIES) lines the ATP pocket. The segment at residues 578–597 (RGEAARYLGISRKTLYNKMR) is a DNA-binding region (H-T-H motif).

In terms of biological role, probable transcriptional regulator that acts in conjunction with sigma-54. The protein is Putative transcriptional regulatory protein y4pA of Sinorhizobium fredii (strain NBRC 101917 / NGR234).